The sequence spans 183 residues: MKQPDRNQQQGAKSNRPAINDEIRSKEVRLVGADGEQKGIVSLNEALRAAEEVELDLVEIVANAEPPVCKIMDYNKHLFDLKQKQKDAKKKQHQVQVKEIKLRPATDVGDYQVKLRAILKFLEEGNKVKITLRFRGREMAHQQLGLAQLQKIEADVTEYGVVEQAPKMEGRQMGMLLGPKKKK.

Residues 1–13 (MKQPDRNQQQGAK) show a composition bias toward polar residues. Positions 1-24 (MKQPDRNQQQGAKSNRPAINDEIR) are disordered.

It belongs to the IF-3 family. In terms of assembly, monomer.

The protein localises to the cytoplasm. In terms of biological role, IF-3 binds to the 30S ribosomal subunit and shifts the equilibrium between 70S ribosomes and their 50S and 30S subunits in favor of the free subunits, thus enhancing the availability of 30S subunits on which protein synthesis initiation begins. The sequence is that of Translation initiation factor IF-3 from Acinetobacter baylyi (strain ATCC 33305 / BD413 / ADP1).